A 249-amino-acid polypeptide reads, in one-letter code: 2-C-methyl-D-erythritol 4-phosphate cytidylyltransferase (249 aa).

Belongs to the IspD/TarI cytidylyltransferase family. IspD subfamily.

The enzyme catalyses 2-C-methyl-D-erythritol 4-phosphate + CTP + H(+) = 4-CDP-2-C-methyl-D-erythritol + diphosphate. It participates in isoprenoid biosynthesis; isopentenyl diphosphate biosynthesis via DXP pathway; isopentenyl diphosphate from 1-deoxy-D-xylulose 5-phosphate: step 2/6. Functionally, catalyzes the formation of 4-diphosphocytidyl-2-C-methyl-D-erythritol from CTP and 2-C-methyl-D-erythritol 4-phosphate (MEP). This is 2-C-methyl-D-erythritol 4-phosphate cytidylyltransferase from Shewanella oneidensis (strain ATCC 700550 / JCM 31522 / CIP 106686 / LMG 19005 / NCIMB 14063 / MR-1).